The sequence spans 200 residues: Small ribosomal subunit protein uS4 (200 aa).

In terms of domain architecture, S4 RNA-binding spans 106-170; that stretch reads RRLQTIVFKK…SPIANELHPI (65 aa). Residues 178–200 form a disordered region; sequence AERVKEEAEKEAAASEDGGEQDE. Over residues 179-190 the composition is skewed to basic and acidic residues; it reads ERVKEEAEKEAA.

This sequence belongs to the universal ribosomal protein uS4 family. As to quaternary structure, part of the 30S ribosomal subunit. Contacts protein S5. The interaction surface between S4 and S5 is involved in control of translational fidelity.

Its function is as follows. One of the primary rRNA binding proteins, it binds directly to 16S rRNA where it nucleates assembly of the body of the 30S subunit. Functionally, with S5 and S12 plays an important role in translational accuracy. This Thermoplasma volcanium (strain ATCC 51530 / DSM 4299 / JCM 9571 / NBRC 15438 / GSS1) protein is Small ribosomal subunit protein uS4.